A 71-amino-acid chain; its full sequence is Palustrin-Ca (71 aa).

The first 22 residues, 1–22, serve as a signal peptide directing secretion; it reads MFTLKKSLLLLFFLGTISLSLC. Residues 23–40 constitute a propeptide that is removed on maturation; the sequence is EQERDADGDEGEVEEVKR. Cys-63 and Cys-69 are oxidised to a cystine.

The protein belongs to the frog skin active peptide (FSAP) family. Brevinin subfamily. In terms of tissue distribution, expressed by the skin glands.

It is found in the secreted. The protein resides in the target cell membrane. Antibacterial peptide with amphipathic alpha-helical structure that exhibits potent broad-spectrum activity against Gram-positive and -negative bacteria. It is active against Listeria ATCC 54004 (MIC=30 ug/ml), S.aureus ATCC 25923 (MIC=7.8 ug/ml), S.suis 2 CVCC 606 (MIC=31.25 ug/ml), B.subtilis ADB403 (30 ug/ml), K.pneumoniae ATCC 700603 (MIC=60 ug/ml) and P.aeruginosa ATCC 227853 (MIC=30 ug/ml). Does not show activity against Salmonella ATCC 20020 and the fungus Candida albicans. Is also cytotoxic to HeLa cells at high concentrations. In addition, shows a strong antitumor activity but only a little hemolytic activity. Despite the presence of a Gly residue at position 10, this alpha-helical peptide remains relatively rigid, not exhibiting any significant flexibility during the molecular dynamics simulation. The peptide shows a preference for a position parallel to the target membrane that suggests it exerts its antimicrobial activity through a non-pore-forming mechanism of action, such as the carpet model or the interfacial activity model. This Aquarana catesbeiana (American bullfrog) protein is Palustrin-Ca.